An 85-amino-acid polypeptide reads, in one-letter code: Small ribosomal subunit protein uS17 (85 aa).

Belongs to the universal ribosomal protein uS17 family. As to quaternary structure, part of the 30S ribosomal subunit.

Functionally, one of the primary rRNA binding proteins, it binds specifically to the 5'-end of 16S ribosomal RNA. This chain is Small ribosomal subunit protein uS17, found in Lachnospira eligens (strain ATCC 27750 / DSM 3376 / VPI C15-48 / C15-B4) (Eubacterium eligens).